The primary structure comprises 57 residues: Probable mRNA interferase HicA 1 (57 aa).

Belongs to the HicA mRNA interferase family. As to quaternary structure, probably forms a complex with the cognate antitoxin HicB 1 which inhibits the mRNA interferase activity.

Its function is as follows. Toxic component of a type II toxin-antitoxin (TA) system. A probable translation-independent mRNA interferase. The sequence is that of Probable mRNA interferase HicA 1 (hicA1) from Photorhabdus laumondii subsp. laumondii (strain DSM 15139 / CIP 105565 / TT01) (Photorhabdus luminescens subsp. laumondii).